The following is a 300-amino-acid chain: tRNA dimethylallyltransferase (300 aa).

11 to 18 (GPTAVGKS) provides a ligand contact to ATP. 13 to 18 (TAVGKS) contributes to the substrate binding site. The interaction with substrate tRNA stretch occupies residues 35–38 (DSVQ).

The protein belongs to the IPP transferase family. Monomer. Requires Mg(2+) as cofactor.

It catalyses the reaction adenosine(37) in tRNA + dimethylallyl diphosphate = N(6)-dimethylallyladenosine(37) in tRNA + diphosphate. Catalyzes the transfer of a dimethylallyl group onto the adenine at position 37 in tRNAs that read codons beginning with uridine, leading to the formation of N6-(dimethylallyl)adenosine (i(6)A). The polypeptide is tRNA dimethylallyltransferase (Borrelia hermsii (strain HS1 / DAH)).